Here is a 314-residue protein sequence, read N- to C-terminus: tRNA dimethylallyltransferase (314 aa).

13–20 (GPTAIGKT) provides a ligand contact to ATP. Residue 15 to 20 (TAIGKT) participates in substrate binding. The interval 38-41 (DSMQ) is interaction with substrate tRNA.

It belongs to the IPP transferase family. Monomer. Requires Mg(2+) as cofactor.

The catalysed reaction is adenosine(37) in tRNA + dimethylallyl diphosphate = N(6)-dimethylallyladenosine(37) in tRNA + diphosphate. In terms of biological role, catalyzes the transfer of a dimethylallyl group onto the adenine at position 37 in tRNAs that read codons beginning with uridine, leading to the formation of N6-(dimethylallyl)adenosine (i(6)A). The polypeptide is tRNA dimethylallyltransferase (Desulfotalea psychrophila (strain LSv54 / DSM 12343)).